A 361-amino-acid polypeptide reads, in one-letter code: UDP-N-acetylglucosamine--N-acetylmuramyl-(pentapeptide) pyrophosphoryl-undecaprenol N-acetylglucosamine transferase (361 aa).

UDP-N-acetyl-alpha-D-glucosamine is bound by residues 11 to 13, Asn-124, Arg-164, Ser-192, and Gln-295; that span reads TGG.

It belongs to the glycosyltransferase 28 family. MurG subfamily.

The protein resides in the cell membrane. The enzyme catalyses di-trans,octa-cis-undecaprenyl diphospho-N-acetyl-alpha-D-muramoyl-L-alanyl-D-glutamyl-meso-2,6-diaminopimeloyl-D-alanyl-D-alanine + UDP-N-acetyl-alpha-D-glucosamine = di-trans,octa-cis-undecaprenyl diphospho-[N-acetyl-alpha-D-glucosaminyl-(1-&gt;4)]-N-acetyl-alpha-D-muramoyl-L-alanyl-D-glutamyl-meso-2,6-diaminopimeloyl-D-alanyl-D-alanine + UDP + H(+). The protein operates within cell wall biogenesis; peptidoglycan biosynthesis. Functionally, cell wall formation. Catalyzes the transfer of a GlcNAc subunit on undecaprenyl-pyrophosphoryl-MurNAc-pentapeptide (lipid intermediate I) to form undecaprenyl-pyrophosphoryl-MurNAc-(pentapeptide)GlcNAc (lipid intermediate II). The sequence is that of UDP-N-acetylglucosamine--N-acetylmuramyl-(pentapeptide) pyrophosphoryl-undecaprenol N-acetylglucosamine transferase from Deinococcus geothermalis (strain DSM 11300 / CIP 105573 / AG-3a).